Reading from the N-terminus, the 358-residue chain is Alanine racemase (358 aa).

Lysine 35 functions as the Proton acceptor; specific for D-alanine in the catalytic mechanism. An N6-(pyridoxal phosphate)lysine modification is found at lysine 35. Residue arginine 130 coordinates substrate. The active-site Proton acceptor; specific for L-alanine is the tyrosine 255. Substrate is bound at residue methionine 303.

Belongs to the alanine racemase family. Pyridoxal 5'-phosphate is required as a cofactor.

The enzyme catalyses L-alanine = D-alanine. It participates in amino-acid biosynthesis; D-alanine biosynthesis; D-alanine from L-alanine: step 1/1. Functionally, catalyzes the interconversion of L-alanine and D-alanine. May also act on other amino acids. The protein is Alanine racemase (alr) of Shewanella baltica (strain OS223).